The following is a 195-amino-acid chain: ATP-dependent Clp protease proteolytic subunit (195 aa).

Ser98 functions as the Nucleophile in the catalytic mechanism. His123 is an active-site residue.

Belongs to the peptidase S14 family. As to quaternary structure, fourteen ClpP subunits assemble into 2 heptameric rings which stack back to back to give a disk-like structure with a central cavity, resembling the structure of eukaryotic proteasomes.

The protein localises to the cytoplasm. The catalysed reaction is Hydrolysis of proteins to small peptides in the presence of ATP and magnesium. alpha-casein is the usual test substrate. In the absence of ATP, only oligopeptides shorter than five residues are hydrolyzed (such as succinyl-Leu-Tyr-|-NHMec, and Leu-Tyr-Leu-|-Tyr-Trp, in which cleavage of the -Tyr-|-Leu- and -Tyr-|-Trp bonds also occurs).. Functionally, cleaves peptides in various proteins in a process that requires ATP hydrolysis. Has a chymotrypsin-like activity. Plays a major role in the degradation of misfolded proteins. This chain is ATP-dependent Clp protease proteolytic subunit, found in Alkaliphilus oremlandii (strain OhILAs) (Clostridium oremlandii (strain OhILAs)).